We begin with the raw amino-acid sequence, 517 residues long: Maturase K (517 aa).

It belongs to the intron maturase 2 family. MatK subfamily.

The protein resides in the plastid. Its subcellular location is the chloroplast. Functionally, usually encoded in the trnK tRNA gene intron. Probably assists in splicing its own and other chloroplast group II introns. This is Maturase K from Palhinhaea cernua (Nodding clubmoss).